The chain runs to 612 residues: Dihydroxy-acid dehydratase (612 aa).

D81 serves as a coordination point for Mg(2+). C122 contributes to the [2Fe-2S] cluster binding site. Mg(2+)-binding residues include D123 and K124. Position 124 is an N6-carboxylysine (K124). C195 contributes to the [2Fe-2S] cluster binding site. Mg(2+) is bound at residue E491. Residue S517 is the Proton acceptor of the active site.

The protein belongs to the IlvD/Edd family. As to quaternary structure, homodimer. [2Fe-2S] cluster is required as a cofactor. Mg(2+) serves as cofactor.

The enzyme catalyses (2R)-2,3-dihydroxy-3-methylbutanoate = 3-methyl-2-oxobutanoate + H2O. It carries out the reaction (2R,3R)-2,3-dihydroxy-3-methylpentanoate = (S)-3-methyl-2-oxopentanoate + H2O. It functions in the pathway amino-acid biosynthesis; L-isoleucine biosynthesis; L-isoleucine from 2-oxobutanoate: step 3/4. Its pathway is amino-acid biosynthesis; L-valine biosynthesis; L-valine from pyruvate: step 3/4. In terms of biological role, functions in the biosynthesis of branched-chain amino acids. Catalyzes the dehydration of (2R,3R)-2,3-dihydroxy-3-methylpentanoate (2,3-dihydroxy-3-methylvalerate) into 2-oxo-3-methylpentanoate (2-oxo-3-methylvalerate) and of (2R)-2,3-dihydroxy-3-methylbutanoate (2,3-dihydroxyisovalerate) into 2-oxo-3-methylbutanoate (2-oxoisovalerate), the penultimate precursor to L-isoleucine and L-valine, respectively. In Bartonella tribocorum (strain CIP 105476 / IBS 506), this protein is Dihydroxy-acid dehydratase.